The sequence spans 180 residues: F17 fimbrial protein (180 aa).

The signal sequence occupies residues 1–21 (MQKIQFILGILAAASSSATLA). Cys-37 and Cys-77 are oxidised to a cystine.

Belongs to the fimbrial protein family.

The protein resides in the fimbrium. Its function is as follows. Fimbriae (also called pili), polar filaments radiating from the surface of the bacterium to a length of 0.5-1.5 micrometers and numbering 100-300 per cell, enable bacteria to colonize the epithelium of specific host organs. In Escherichia coli, this protein is F17 fimbrial protein (F17a-A).